A 103-amino-acid chain; its full sequence is Phosphoribosyl-ATP pyrophosphatase (103 aa).

This sequence belongs to the PRA-PH family.

The protein resides in the cytoplasm. It carries out the reaction 1-(5-phospho-beta-D-ribosyl)-ATP + H2O = 1-(5-phospho-beta-D-ribosyl)-5'-AMP + diphosphate + H(+). It participates in amino-acid biosynthesis; L-histidine biosynthesis; L-histidine from 5-phospho-alpha-D-ribose 1-diphosphate: step 2/9. The protein is Phosphoribosyl-ATP pyrophosphatase of Listeria monocytogenes serotype 4b (strain CLIP80459).